We begin with the raw amino-acid sequence, 115 residues long: MNLLLTLLTNTTLALLLVFIAFWLPQLNVYAEKTSPYECGFDPMGSARLPFSMKFFLVAITFLLFDLEIALLLPLPWAIQSNNLNTMLTMALFLISLLAASLAYEWTQEGLEWAE.

The next 3 membrane-spanning stretches (helical) occupy residues 3–23 (LLLT…IAFW), 55–75 (FFLV…LLPL), and 84–104 (LNTM…SLAY).

It belongs to the complex I subunit 3 family. As to quaternary structure, core subunit of respiratory chain NADH dehydrogenase (Complex I) which is composed of 45 different subunits. Interacts with TMEM186. Interacts with TMEM242.

The protein resides in the mitochondrion inner membrane. The catalysed reaction is a ubiquinone + NADH + 5 H(+)(in) = a ubiquinol + NAD(+) + 4 H(+)(out). Functionally, core subunit of the mitochondrial membrane respiratory chain NADH dehydrogenase (Complex I) which catalyzes electron transfer from NADH through the respiratory chain, using ubiquinone as an electron acceptor. Essential for the catalytic activity of complex I. The sequence is that of NADH-ubiquinone oxidoreductase chain 3 from Balaenoptera musculus (Blue whale).